We begin with the raw amino-acid sequence, 390 residues long: GTPase Obg (390 aa).

Residues 1 to 159 (MKFVDEATIL…RELTLELLLL (159 aa)) enclose the Obg domain. A disordered region spans residues 128–147 (SRFKSSVNRAPRQKTNGTKG). Residues 129 to 145 (RFKSSVNRAPRQKTNGT) are compositionally biased toward polar residues. Positions 160–333 (ADVGMLGLPN…LCWDVMNFLK (174 aa)) constitute an OBG-type G domain. Residues 166–173 (GLPNAGKS), 191–195 (FTTLV), 213–216 (DIPG), 283–286 (NKVD), and 314–316 (SAA) each bind GTP. Mg(2+) contacts are provided by Ser173 and Thr193.

Belongs to the TRAFAC class OBG-HflX-like GTPase superfamily. OBG GTPase family. In terms of assembly, monomer. Mg(2+) serves as cofactor.

The protein resides in the cytoplasm. In terms of biological role, an essential GTPase which binds GTP, GDP and possibly (p)ppGpp with moderate affinity, with high nucleotide exchange rates and a fairly low GTP hydrolysis rate. Plays a role in control of the cell cycle, stress response, ribosome biogenesis and in those bacteria that undergo differentiation, in morphogenesis control. The polypeptide is GTPase Obg (Pectobacterium atrosepticum (strain SCRI 1043 / ATCC BAA-672) (Erwinia carotovora subsp. atroseptica)).